We begin with the raw amino-acid sequence, 977 residues long: GAS2-like protein pickled eggs (977 aa).

The region spanning 20-159 (EAMREDLAEW…CLLEVARRGA (140 aa)) is the Calponin-homology (CH) domain. The tract at residues 218–245 (VETDLYDDSDDSETEDDGDQNPVLMYGP) is disordered. The segment covering 221-236 (DLYDDSDDSETEDDGD) has biased composition (acidic residues). The GAR domain occupies 252 to 324 (NDLKSLDEMV…HYLDKHDPCR (73 aa)). Disordered stretches follow at residues 397 to 543 (PTLQ…SEIS), 557 to 624 (AQKR…VCDG), 666 to 685 (VANTMGNPTPNLSKIPRSPL), 693 to 803 (IDNS…KGRS), and 910 to 977 (NLER…TELY). Polar residues-rich tracts occupy residues 399–428 (LQNGHSLSPNSGKYRSRSPTPQRKFLNQQA) and 436–454 (ATGSSQTVTTDTSSGQLLG). Residues 502–527 (GGSGVGSAAGGVSSGSAGSGVAGEQG) show a composition bias toward gly residues. Over residues 577-589 (RLDQTSSDSQISP) the composition is skewed to polar residues. Over residues 601 to 620 (ILEEEDLNGQDREEDQEDYS) the composition is skewed to acidic residues. Composition is skewed to polar residues over residues 666 to 677 (VANTMGNPTPNL) and 731 to 741 (TRNSTGATTTP). Positions 928–953 (SSAASSCESNNSNAGAGSGAAAGSAS) are enriched in low complexity.

This sequence belongs to the GAS2 family. As to expression, expressed in the ovary and the ring canals of the germline cells. In larvae, expressed in the notal region of the wing disk.

The protein localises to the cytoplasm. It is found in the cytoskeleton. The protein resides in the cell cortex. Its function is as follows. Essential for development and viability. Required for ovary development and oogenesis, and is essential for the development of the indirect flight muscles. May act as a negative regulator of the Notch signaling pathway in certain tissues, such as the muscle precursors and ovaries. May function as a linker protein between the actin and microtubule cytoskeletons. The chain is GAS2-like protein pickled eggs from Drosophila melanogaster (Fruit fly).